The chain runs to 88 residues: Large ribosomal subunit protein bL27 (88 aa).

The disordered stretch occupies residues 1–24 (MAHKKAGGSSRNGRDSAGQRRGVK).

Belongs to the bacterial ribosomal protein bL27 family.

The sequence is that of Large ribosomal subunit protein bL27 from Syntrophobacter fumaroxidans (strain DSM 10017 / MPOB).